Consider the following 174-residue polypeptide: Small ribosomal subunit protein uS5 (174 aa).

The S5 DRBM domain maps to 16–79 (LSELLVSVRR…NAAKKSMIRV (64 aa)).

It belongs to the universal ribosomal protein uS5 family. As to quaternary structure, part of the 30S ribosomal subunit. Contacts proteins S4 and S8.

Its function is as follows. With S4 and S12 plays an important role in translational accuracy. In terms of biological role, located at the back of the 30S subunit body where it stabilizes the conformation of the head with respect to the body. This Anaplasma marginale (strain Florida) protein is Small ribosomal subunit protein uS5.